Reading from the N-terminus, the 187-residue chain is Large ribosomal subunit protein uL13 (187 aa).

Belongs to the universal ribosomal protein uL13 family. As to quaternary structure, part of the 50S ribosomal subunit.

Its function is as follows. This protein is one of the early assembly proteins of the 50S ribosomal subunit, although it is not seen to bind rRNA by itself. It is important during the early stages of 50S assembly. This Pyrobaculum aerophilum (strain ATCC 51768 / DSM 7523 / JCM 9630 / CIP 104966 / NBRC 100827 / IM2) protein is Large ribosomal subunit protein uL13.